Consider the following 79-residue polypeptide: D-alanyl carrier protein (79 aa).

Positions 1 to 76 (MEEQVLSLLE…RVMAYVKKRV (76 aa)) constitute a Carrier domain. An O-(pantetheine 4'-phosphoryl)serine modification is found at Ser-34.

Belongs to the DltC family. Post-translationally, 4'-phosphopantetheine is transferred from CoA to a specific serine of apo-DCP.

It localises to the cytoplasm. Its pathway is cell wall biogenesis; lipoteichoic acid biosynthesis. In terms of biological role, carrier protein involved in the D-alanylation of lipoteichoic acid (LTA). The loading of thioester-linked D-alanine onto DltC is catalyzed by D-alanine--D-alanyl carrier protein ligase DltA. The DltC-carried D-alanyl group is further transferred to cell membrane phosphatidylglycerol (PG) by forming an ester bond, probably catalyzed by DltD. D-alanylation of LTA plays an important role in modulating the properties of the cell wall in Gram-positive bacteria, influencing the net charge of the cell wall. This Abiotrophia defectiva (Streptococcus defectivus) protein is D-alanyl carrier protein.